A 92-amino-acid chain; its full sequence is Large ribosomal subunit protein eL37 (92 aa).

Zn(2+)-binding residues include Cys19, Cys22, Cys34, and Cys37. A C4-type zinc finger spans residues 19–37 (CRRCGRSSYHIQKSKCAQC).

This sequence belongs to the eukaryotic ribosomal protein eL37 family. Zn(2+) serves as cofactor.

Binds to the 23S rRNA. This Spodoptera frugiperda (Fall armyworm) protein is Large ribosomal subunit protein eL37 (RpL37).